Reading from the N-terminus, the 78-residue chain is MVRIRLMRLGAKKKPFYRVVVADAKARRNGPFIEIIGTYNPKTDPPEVNLNMERVNYWIDKGAQPSDTVKKLIERVSA.

The protein belongs to the bacterial ribosomal protein bS16 family.

This is Small ribosomal subunit protein bS16 from Thermodesulfovibrio yellowstonii (strain ATCC 51303 / DSM 11347 / YP87).